A 195-amino-acid chain; its full sequence is Recombination protein RecR (195 aa).

The C4-type zinc finger occupies 53–68 (CPVCFNIDVKSPCSIC). The Toprim domain occupies 76 to 171 (QLLCIVEELG…KVTRLACGIP (96 aa)).

This sequence belongs to the RecR family.

Functionally, may play a role in DNA repair. It seems to be involved in an RecBC-independent recombinational process of DNA repair. It may act with RecF and RecO. This chain is Recombination protein RecR, found in Ehrlichia chaffeensis (strain ATCC CRL-10679 / Arkansas).